The following is a 127-amino-acid chain: Holo-[acyl-carrier-protein] synthase (127 aa).

Positions 8 and 57 each coordinate Mg(2+).

Belongs to the P-Pant transferase superfamily. AcpS family. It depends on Mg(2+) as a cofactor.

It localises to the cytoplasm. The enzyme catalyses apo-[ACP] + CoA = holo-[ACP] + adenosine 3',5'-bisphosphate + H(+). Its function is as follows. Transfers the 4'-phosphopantetheine moiety from coenzyme A to a Ser of acyl-carrier-protein. This Ruthia magnifica subsp. Calyptogena magnifica protein is Holo-[acyl-carrier-protein] synthase.